The following is an 89-amino-acid chain: Small ribosomal subunit protein eS25A (89 aa).

The protein belongs to the eukaryotic ribosomal protein eS25 family. Component of the small ribosomal subunit (SSU). Mature yeast ribosomes consist of a small (40S) and a large (60S) subunit. The 40S small subunit contains 1 molecule of ribosomal RNA (18S rRNA) and at least 33 different proteins. The large 60S subunit contains 3 rRNA molecules (25S, 5.8S and 5S rRNA) and at least 46 different proteins.

The protein localises to the cytoplasm. Component of the ribosome, a large ribonucleoprotein complex responsible for the synthesis of proteins in the cell. The small ribosomal subunit (SSU) binds messenger RNAs (mRNAs) and translates the encoded message by selecting cognate aminoacyl-transfer RNA (tRNA) molecules. The large subunit (LSU) contains the ribosomal catalytic site termed the peptidyl transferase center (PTC), which catalyzes the formation of peptide bonds, thereby polymerizing the amino acids delivered by tRNAs into a polypeptide chain. The nascent polypeptides leave the ribosome through a tunnel in the LSU and interact with protein factors that function in enzymatic processing, targeting, and the membrane insertion of nascent chains at the exit of the ribosomal tunnel. The sequence is that of Small ribosomal subunit protein eS25A (rps2502) from Schizosaccharomyces pombe (strain 972 / ATCC 24843) (Fission yeast).